The sequence spans 385 residues: Transcription termination factor 2, mitochondrial (385 aa).

The transit peptide at 1–35 directs the protein to the mitochondrion; it reads MSWRLLTGYQLCRLRLFRKPQPALKIRPSSVCVTY.

The protein belongs to the mTERF family. Monomer.

It localises to the mitochondrion matrix. The protein resides in the mitochondrion nucleoid. Functionally, binds mitochondrial DNA and plays a role in the regulation of transcription of mitochondrial mRNA and rRNA species. The protein is Transcription termination factor 2, mitochondrial (Mterf2) of Rattus norvegicus (Rat).